We begin with the raw amino-acid sequence, 273 residues long: Nitrogenase iron protein (273 aa).

8 to 15 (GKGGIGKS) is an ATP binding site. Cys95 provides a ligand contact to [4Fe-4S] cluster. Arg98 is modified (ADP-ribosylarginine; by dinitrogenase reductase ADP-ribosyltransferase). A [4Fe-4S] cluster-binding site is contributed by Cys130.

The protein belongs to the NifH/BchL/ChlL family. As to quaternary structure, homodimer. [4Fe-4S] cluster serves as cofactor. The reversible ADP-ribosylation of Arg-98 inactivates the nitrogenase reductase and regulates nitrogenase activity.

The catalysed reaction is N2 + 8 reduced [2Fe-2S]-[ferredoxin] + 16 ATP + 16 H2O = H2 + 8 oxidized [2Fe-2S]-[ferredoxin] + 2 NH4(+) + 16 ADP + 16 phosphate + 6 H(+). In terms of biological role, the key enzymatic reactions in nitrogen fixation are catalyzed by the nitrogenase complex, which has 2 components: the iron protein and the molybdenum-iron protein. The sequence is that of Nitrogenase iron protein from Roseiflexus castenholzii (strain DSM 13941 / HLO8).